A 201-amino-acid chain; its full sequence is Putative pseudouridine methyltransferase (201 aa).

S-adenosyl-L-methionine contacts are provided by methionine 132 and cysteine 186.

Belongs to the methyltransferase superfamily. TrmY family.

It localises to the cytoplasm. This Vibrio cholerae serotype O1 (strain ATCC 39315 / El Tor Inaba N16961) protein is Putative pseudouridine methyltransferase.